The chain runs to 334 residues: Glutaredoxin-3 (334 aa).

Residue Ala2 is modified to N-acetylalanine. The Thioredoxin domain maps to 2–116 (AGGAAEAAAA…LTKKVQRHAS (115 aa)). The tract at residues 110–131 (KVQRHASSGSFSPSGSEHPKED) is disordered. Ser116 and Ser119 each carry phosphoserine. Over residues 116 to 125 (SSGSFSPSGS) the composition is skewed to low complexity. Glutaredoxin domains are found at residues 145 to 235 (CMLF…PKLE) and 236 to 334 (ERLK…KGEN). Positions 158 and 260 each coordinate [2Fe-2S] cluster.

In terms of assembly, homodimer; the homodimer is independent of 2Fe-2S clusters. Heterotrimer; forms a heterotrimeric complex composed by two BOLA2 molecules and one GLRX3 molecule; linked by [2Fe-2S] clusters. Interacts (via N-terminus) with PRKCQ/PKC-theta. Interacts (via C-terminus) with CSRP3. Interacts with CSRP2.

The protein resides in the cytoplasm. It localises to the cytosol. Its subcellular location is the cell cortex. The protein localises to the myofibril. It is found in the sarcomere. The protein resides in the z line. Its function is as follows. Together with BOLA2, acts as a cytosolic iron-sulfur (Fe-S) cluster assembly factor that facilitates [2Fe-2S] cluster insertion into a subset of cytosolic proteins. Acts as a critical negative regulator of cardiac hypertrophy and a positive inotropic regulator. Required for hemoglobin maturation. Does not possess any thyoredoxin activity since it lacks the conserved motif that is essential for catalytic activity. The sequence is that of Glutaredoxin-3 (GLRX3) from Bos taurus (Bovine).